Reading from the N-terminus, the 60-residue chain is Chromatin protein Cren7 (60 aa).

It belongs to the Cren7 family. As to quaternary structure, monomer. Post-translationally, methylated at multiple sites, to varying extents.

The protein resides in the chromosome. Its subcellular location is the cytoplasm. A chromatin protein, binds double-stranded DNA without sequence specificity. Constrains negative DNA supercoils. In Saccharolobus islandicus (strain M.16.4 / Kamchatka #3) (Sulfolobus islandicus), this protein is Chromatin protein Cren7.